The sequence spans 136 residues: UPF0102 protein BBta_0181 (136 aa).

It belongs to the UPF0102 family.

This is UPF0102 protein BBta_0181 from Bradyrhizobium sp. (strain BTAi1 / ATCC BAA-1182).